The following is a 230-amino-acid chain: Dickkopf-like protein 1 (230 aa).

The signal sequence occupies residues 1–20; the sequence is MCRLRVLLLLLPLAFVSSSA. N-linked (GlcNAc...) asparagine glycans are attached at residues Asn31, Asn87, and Asn102.

Interacts with SLXL1; Co-localize in seminiferous tubules. Interacts with SLY. Post-translationally, N-glycosylated during spermatogenesis. Not N-glycosylated in mature sperm. In terms of tissue distribution, testis-specific. Abundant in the seminiferous tubules where it is associated with developing spermatocytes. Expressed only in testis (at protein level). Not detectable on postnatal days 4 and 9 but after day 18 it gradually increased as the development of testes progressed. Expressed at high levels in testis and at weak levels in epididymis.

It is found in the secreted. It localises to the cytoplasmic vesicle. The protein localises to the secretory vesicle. The protein resides in the acrosome. In terms of biological role, involved in fertilization by facilitating sperm penetration of the zona pellucida. May promote spermatocyte apoptosis, thereby limiting sperm production. In adults, may reduce testosterone synthesis in Leydig cells. Is not essential either for development or fertility. This is Dickkopf-like protein 1 from Mus musculus (Mouse).